The primary structure comprises 282 residues: Large ribosomal subunit protein uL2 (282 aa).

The disordered stretch occupies residues 230–282 (AMNPIDHPLGGGEGRSSGGRHPVSPWGMPAKGYKTRDKKKASSRLIVKRRGQK). The span at 265-282 (RDKKKASSRLIVKRRGQK) shows a compositional bias: basic residues.

This sequence belongs to the universal ribosomal protein uL2 family. As to quaternary structure, part of the 50S ribosomal subunit. Forms a bridge to the 30S subunit in the 70S ribosome.

In terms of biological role, one of the primary rRNA binding proteins. Required for association of the 30S and 50S subunits to form the 70S ribosome, for tRNA binding and peptide bond formation. It has been suggested to have peptidyltransferase activity; this is somewhat controversial. Makes several contacts with the 16S rRNA in the 70S ribosome. This Desulfovibrio desulfuricans (strain ATCC 27774 / DSM 6949 / MB) protein is Large ribosomal subunit protein uL2.